Consider the following 728-residue polypeptide: Plakophilin-1 (728 aa).

Residues 1-235 are required for binding to single stranded DNA; it reads MNHSPLKTAL…SFGHSRASSK (235 aa). A required for interaction with EIF4A1 region spans residues 1–287; sequence MNHSPLKTAL…ESAKQQVYQL (287 aa). A Phosphoserine; by RIPK4 modification is found at Ser4. The disordered stretch occupies residues 48-69; that stretch reads TVKRQKSKSSQSSTLSHSNRGS. Phosphorylation in this region is required for cytoplasmic localization and protein stabilization stretches follow at residues 54–69 and 117–192; these read SKSS…NRGS and RFSS…STCS. The residue at position 119 (Ser119) is a Phosphoserine. Position 120 is a phosphoserine; by RIPK4 (Ser120). Position 122 is a phosphoserine (Ser122). Ser143 carries the post-translational modification Phosphoserine; by RIPK4. The tract at residues 161 to 270 is required for WNT-mediated nuclear localization; sequence YCDPRGTLRK…KYQAIGAYYI (110 aa). 9 ARM repeats span residues 244 to 275, 276 to 317, 318 to 360, 361 to 412, 413 to 443, 505 to 536, 537 to 583, 584 to 629, and 630 to 694; these read SGLT…HTCF, QDES…NLVF, RSTP…NLSS, TDEL…GCLR, NLSS…NCVA, NYDC…LNLM, GKSK…IARL, LQSG…SHTG, and NTSN…DMWA.

The protein belongs to the beta-catenin family. As to quaternary structure, part of a complex that contains DSG3, PKP1, YAP1 and YWHAG; the complex is required for localization of DSG3 and YAP1 to the cell membrane in keratinocytes. Interacts (via N-terminus) with KRT5/CK5, KRT8/CK8 (via rod domain), KRT15/CK15 and KRT18/CK18 (via rod domain) as part of intermediate filaments. Interacts with VIM (via rod domain). Interacts with DSP. Interacts with DES. Interacts with FXR1; the interaction may facilitate the binding of PKP1 to PKP2, PKP3 and DSP mRNA. Interacts (via N-terminus) with EIF4A1; the interaction promotes EIF4A1 recruitment to the cap-dependent translation complex and EIF4A1 ATPase activity. Interacts with TJP1/ZO-1; the interaction facilitates TJP1/ZO-1 localization to the plasma membrane. Interacts (when phosphorylated) with YWHAG; the interaction results in translocation of PKP1 to the cytoplasm and loss of intercellular adhesion in keratinocytes. Phosphorylated by AKT2; required for interaction with YWHAG and subsequent localization away from desmosomes to the cytoplasm. Phosphorylation of Ser-119 by AKT2 promotes PKP1-driven cap-dependent mRNA translation and decreases intercellular adhesion, phosphorylation is promoted by insulin. Phosphorylation by RIPK4 at the N-terminus is required for its role in differentiation of keratinocytes and DSG1 localization at cell junctions. As to expression, expressed in undifferentiated keratinocytes of the epidermis at birth, expression increases as differentiation proceeds (at protein level). Expressed in the cervical loop during early tooth differentiation, expression is then present between ameloblasts, at ameloblast-ameloblast junctions and in the stratum intermedium during pre-secretory and secretory stages of tooth development (at protein level).

It localises to the nucleus. It is found in the cytoplasm. The protein resides in the perinuclear region. Its subcellular location is the cell junction. The protein localises to the desmosome. It localises to the cell membrane. It is found in the stress granule. A component of desmosome cell-cell junctions which are required for positive regulation of cellular adhesion. Plays a role in desmosome protein expression regulation and localization to the desmosomal plaque, thereby maintaining cell sheet integrity and anchorage of desmosomes to intermediate filaments. Required for localization of DSG3 and YAP1 to the cell membrane in keratinocytes in response to mechanical strain, via the formation of an interaction complex composed of DSG3, YAP1, PKP1 and YWHAG. Positively regulates differentiation of keratinocytes, potentially via promoting localization of DSG1 at desmosome cell junctions. Required for calcium-independent development and maturation of desmosome plaques specifically at lateral cell-cell contacts in differentiating keratinocytes. Plays a role in the maintenance of DSG3 protein abundance, DSG3 clustering and localization of these clusters to the cell membrane in keratinocytes. May also promote keratinocyte proliferation and morphogenesis during postnatal development. Required for tight junction inside-out transepidermal barrier function of the skin, and is thereby involved in neonatal survival possibly via maintenance of hydration levels. Promotes Wnt-mediated proliferation and differentiation of ameloblasts, via facilitating TJP1/ZO-1 localization to tight junctions. Binds single-stranded DNA (ssDNA), and may thereby play a role in sensing DNA damage and promoting cell survival. Positively regulates cap-dependent translation and as a result cell proliferation, via recruitment of EIF4A1 to the initiation complex and promotion of EIF4A1 ATPase activity. Regulates the mRNA stability and protein abundance of desmosome components PKP2, PKP3, DSC2 and DSP, potentially via its interaction with FXR1. The polypeptide is Plakophilin-1 (Pkp1) (Mus musculus (Mouse)).